The sequence spans 310 residues: MDVDVFNGWGRPRFEDESLMPPGFRFHPTDEELITYYLLKKVLDSNFSCAAISQVDLNKSEPWELPEKAKMGEKEWYFFTLRDRKYPTGLRTNRATEAGYWKATGKDREIKSSKTKSLLGMKKTLVFYKGRAPKGEKSCWVMHEYRLDGKFSYHYISSSAKDEWVLCKVCLKSGVVSRETNLISSSSSSAVTGEFSSAGSAIAPIINTFATEHVSCFSNNSAAHTDASFHTFLPAPPPSLPPRQPRHVGDGVAFGQFLDLGSSGQIDFDAAAAAFFPNLPSLPPTVLPPPPSFAMYGGGSPAVSVWPFTL.

The region spanning 20 to 172 (MPPGFRFHPT…EWVLCKVCLK (153 aa)) is the NAC domain. The DNA-binding element occupies 119 to 178 (LGMKKTLVFYKGRAPKGEKSCWVMHEYRLDGKFSYHYISSSAKDEWVLCKVCLKSGVVSR). 2 involved in transactivation activity regions span residues 179–210 (ETNL…NTFA) and 306–310 (WPFTL).

As to expression, expressed in inflorescence stems, rosette leaves, aerial parts of seedlings, flowers, floral buds and roots.

It is found in the nucleus. Its function is as follows. Transcription activator of STM and KNAT6. Involved in molecular mechanisms regulating shoot apical meristem (SAM) formation during embryogenesis and organ separation. Required for the fusion of septa of gynoecia along the length of the ovaries. Activates the shoot formation in callus in a STM-dependent manner. Seems to act as an inhibitor of cell division. This is Protein CUP-SHAPED COTYLEDON 1 (NAC054) from Arabidopsis thaliana (Mouse-ear cress).